The following is a 148-amino-acid chain: 3-hydroxyacyl-[acyl-carrier-protein] dehydratase FabZ (148 aa).

The active site involves histidine 55.

It belongs to the thioester dehydratase family. FabZ subfamily.

The protein localises to the cytoplasm. It catalyses the reaction a (3R)-hydroxyacyl-[ACP] = a (2E)-enoyl-[ACP] + H2O. Involved in unsaturated fatty acids biosynthesis. Catalyzes the dehydration of short chain beta-hydroxyacyl-ACPs and long chain saturated and unsaturated beta-hydroxyacyl-ACPs. In Haemophilus influenzae (strain 86-028NP), this protein is 3-hydroxyacyl-[acyl-carrier-protein] dehydratase FabZ.